Here is a 152-residue protein sequence, read N- to C-terminus: Transcription elongation factor Spt5 (152 aa).

A KOW domain is found at 94-124 (PGDLVEVIAGPFKGQKAKVVKIDESKDEVVV).

The protein belongs to the archaeal Spt5 family. In terms of assembly, heterodimer composed of Spt4 and Spt5. Interacts with RNA polymerase (RNAP) independently of nucleic acids. Forms a homodimer in solution.

In terms of biological role, stimulates transcription elongation. The protein is Transcription elongation factor Spt5 of Pyrococcus furiosus (strain ATCC 43587 / DSM 3638 / JCM 8422 / Vc1).